A 361-amino-acid chain; its full sequence is Ribosomal RNA large subunit methyltransferase M (361 aa).

S-adenosyl-L-methionine is bound by residues Ser187, Cys220–Gly223, Asp239, Asp259, and Asp276. Lys305 acts as the Proton acceptor in catalysis.

The protein belongs to the class I-like SAM-binding methyltransferase superfamily. RNA methyltransferase RlmE family. RlmM subfamily. Monomer.

Its subcellular location is the cytoplasm. It catalyses the reaction cytidine(2498) in 23S rRNA + S-adenosyl-L-methionine = 2'-O-methylcytidine(2498) in 23S rRNA + S-adenosyl-L-homocysteine + H(+). Catalyzes the 2'-O-methylation at nucleotide C2498 in 23S rRNA. This is Ribosomal RNA large subunit methyltransferase M from Shewanella sp. (strain ANA-3).